We begin with the raw amino-acid sequence, 297 residues long: MQLKSYPAPTYAQRAKIAFQYMMPQLYLTQAAGWLAERKWGVITHFIINVFAKKYQVNLAEAEKTKASDYASFNEFFIRPLKENARPINQNPQALCLPADGRVSELGKIEENQLLQAKGHQFSLETLLANDLNLADKFKNGNFITTYLSPRDYHRVHMPCDATLRKMIYVPGELFSVNPFLAEHVPNLFARNERLICEFETAFGPMVQILVGATITASMSTVWAGVINPPRAKEVAVYEYLPTGETAVHLKKGQEMGAFRLGSTVINLFPKGAVELEAHLKAGEPTKMGERLGKINL.

Active-site charge relay system; for autoendoproteolytic cleavage activity residues include Asp-100, His-157, and Ser-263. Residue Ser-263 is the Schiff-base intermediate with substrate; via pyruvic acid; for decarboxylase activity of the active site. Ser-263 carries the post-translational modification Pyruvic acid (Ser); by autocatalysis.

The protein belongs to the phosphatidylserine decarboxylase family. PSD-B subfamily. Prokaryotic type I sub-subfamily. Heterodimer of a large membrane-associated beta subunit and a small pyruvoyl-containing alpha subunit. The cofactor is pyruvate. In terms of processing, is synthesized initially as an inactive proenzyme. Formation of the active enzyme involves a self-maturation process in which the active site pyruvoyl group is generated from an internal serine residue via an autocatalytic post-translational modification. Two non-identical subunits are generated from the proenzyme in this reaction, and the pyruvate is formed at the N-terminus of the alpha chain, which is derived from the carboxyl end of the proenzyme. The autoendoproteolytic cleavage occurs by a canonical serine protease mechanism, in which the side chain hydroxyl group of the serine supplies its oxygen atom to form the C-terminus of the beta chain, while the remainder of the serine residue undergoes an oxidative deamination to produce ammonia and the pyruvoyl prosthetic group on the alpha chain. During this reaction, the Ser that is part of the protease active site of the proenzyme becomes the pyruvoyl prosthetic group, which constitutes an essential element of the active site of the mature decarboxylase.

The protein localises to the cell membrane. The enzyme catalyses a 1,2-diacyl-sn-glycero-3-phospho-L-serine + H(+) = a 1,2-diacyl-sn-glycero-3-phosphoethanolamine + CO2. It functions in the pathway phospholipid metabolism; phosphatidylethanolamine biosynthesis; phosphatidylethanolamine from CDP-diacylglycerol: step 2/2. Catalyzes the formation of phosphatidylethanolamine (PtdEtn) from phosphatidylserine (PtdSer). The protein is Phosphatidylserine decarboxylase proenzyme of Glaesserella parasuis serovar 5 (strain SH0165) (Haemophilus parasuis).